Here is a 319-residue protein sequence, read N- to C-terminus: Ribosomal protein L11 methyltransferase (319 aa).

Positions 165, 186, 208, and 251 each coordinate S-adenosyl-L-methionine.

The protein belongs to the methyltransferase superfamily. PrmA family.

Its subcellular location is the cytoplasm. It catalyses the reaction L-lysyl-[protein] + 3 S-adenosyl-L-methionine = N(6),N(6),N(6)-trimethyl-L-lysyl-[protein] + 3 S-adenosyl-L-homocysteine + 3 H(+). In terms of biological role, methylates ribosomal protein L11. In Limosilactobacillus reuteri subsp. reuteri (strain JCM 1112) (Lactobacillus reuteri), this protein is Ribosomal protein L11 methyltransferase.